The chain runs to 45 residues: uncharacterized protein (45 aa).

This is an uncharacterized protein from Bacillus subtilis (strain 168).